A 60-amino-acid polypeptide reads, in one-letter code: Large ribosomal subunit protein bL33 (60 aa).

The protein belongs to the bacterial ribosomal protein bL33 family.

This is Large ribosomal subunit protein bL33 from Christiangramia forsetii (strain DSM 17595 / CGMCC 1.15422 / KT0803) (Gramella forsetii).